The primary structure comprises 236 residues: Sperm flagellar protein 1 (236 aa).

Residues 7-112 form the Calponin-homology (CH) domain; that stretch reads EEALHQLYLW…VLIPLRQRLE (106 aa). Positions 115 to 176 are disordered; sequence QRRRKQGAGS…PRPPAYNRAL (62 aa). The tract at residues 183-236 is essential for homodimerization and microtubule bundling activity; that stretch reads VLQIAEKEQELLASQETVQVLQMKVRRLEHLLQLKNVRIEDLSRRLQQAERKQR.

In terms of assembly, homodimer. Interacts with actin, TJP1, CGN and CDH1. As to expression, expressed in the intestinal epithelial cells (at protein level).

It is found in the cytoplasm. It localises to the cell projection. The protein resides in the cilium. The protein localises to the flagellum. Its subcellular location is the cytoskeleton. It is found in the cilium axoneme. It localises to the apical cell membrane. The protein resides in the basolateral cell membrane. The protein localises to the stress fiber. Its subcellular location is the microvillus. It is found in the lamellipodium. It localises to the filopodium. Microtubule-associated protein involved in the stabilization of microtubules along the axis of migration during radial intercalation. Promotes the establishment and stabilization of an axis of microtubules required for the active migration of cells into the outer epithelium. Microtubule-associated protein that promotes microtubule bundling and stabilizes microtubules against depolymerization in response to cold shock. Essential for ciliary central apparatus formation which requires both its microtubule-binding and bundling activities and for ciliary localization of HYDIN and SPAG6 in ependymal cilia. Binds actin in intestinal epithelial cells (IECs), essential for IECs survival and contributes to formation of filopodia and lamellipodia in migrating IECs. Regulates planar cell polarity signaling pathway and asymmetric microtubule accumulation in ciliated epithelia. This chain is Sperm flagellar protein 1 (SPEF1), found in Homo sapiens (Human).